Consider the following 179-residue polypeptide: NADH dehydrogenase [ubiquinone] 1 beta subcomplex subunit 9 (179 aa).

Alanine 2 is modified (N-acetylalanine). Serine 85 carries the post-translational modification Phosphoserine. A disordered region spans residues 136-162 (EVKQLQEETPPGGPLTEALPPARKEGD).

The protein belongs to the complex I LYR family. In terms of assembly, mammalian complex I is composed of 45 different subunits.

It localises to the mitochondrion inner membrane. In terms of biological role, accessory subunit of the mitochondrial membrane respiratory chain NADH dehydrogenase (Complex I), that is believed to be not involved in catalysis. Complex I functions in the transfer of electrons from NADH to the respiratory chain. The immediate electron acceptor for the enzyme is believed to be ubiquinone. The protein is NADH dehydrogenase [ubiquinone] 1 beta subcomplex subunit 9 (NDUFB9) of Homo sapiens (Human).